Consider the following 533-residue polypeptide: Glucose-6-phosphate isomerase (533 aa).

Catalysis depends on glutamate 341, which acts as the Proton donor. Catalysis depends on residues histidine 372 and lysine 501.

The protein belongs to the GPI family.

It is found in the cytoplasm. It catalyses the reaction alpha-D-glucose 6-phosphate = beta-D-fructose 6-phosphate. It functions in the pathway carbohydrate biosynthesis; gluconeogenesis. The protein operates within carbohydrate degradation; glycolysis; D-glyceraldehyde 3-phosphate and glycerone phosphate from D-glucose: step 2/4. In terms of biological role, catalyzes the reversible isomerization of glucose-6-phosphate to fructose-6-phosphate. This Cereibacter sphaeroides (strain ATCC 17025 / ATH 2.4.3) (Rhodobacter sphaeroides) protein is Glucose-6-phosphate isomerase.